A 212-amino-acid chain; its full sequence is Dephospho-CoA kinase (212 aa).

The 206-residue stretch at 6 to 211 folds into the DPCK domain; it reads RLGLTGGIGS…LSCQPLSPNQ (206 aa). 14–19 provides a ligand contact to ATP; sequence GSGKST.

This sequence belongs to the CoaE family.

The protein resides in the cytoplasm. The catalysed reaction is 3'-dephospho-CoA + ATP = ADP + CoA + H(+). It participates in cofactor biosynthesis; coenzyme A biosynthesis; CoA from (R)-pantothenate: step 5/5. Catalyzes the phosphorylation of the 3'-hydroxyl group of dephosphocoenzyme A to form coenzyme A. This is Dephospho-CoA kinase from Albidiferax ferrireducens (strain ATCC BAA-621 / DSM 15236 / T118) (Rhodoferax ferrireducens).